A 300-amino-acid chain; its full sequence is 4-hydroxy-tetrahydrodipicolinate synthase (300 aa).

A pyruvate-binding site is contributed by Thr54. Tyr142 serves as the catalytic Proton donor/acceptor. Lys170 (schiff-base intermediate with substrate) is an active-site residue. Ile212 contacts pyruvate.

It belongs to the DapA family. Homotetramer; dimer of dimers.

Its subcellular location is the cytoplasm. It carries out the reaction L-aspartate 4-semialdehyde + pyruvate = (2S,4S)-4-hydroxy-2,3,4,5-tetrahydrodipicolinate + H2O + H(+). It participates in amino-acid biosynthesis; L-lysine biosynthesis via DAP pathway; (S)-tetrahydrodipicolinate from L-aspartate: step 3/4. In terms of biological role, catalyzes the condensation of (S)-aspartate-beta-semialdehyde [(S)-ASA] and pyruvate to 4-hydroxy-tetrahydrodipicolinate (HTPA). The polypeptide is 4-hydroxy-tetrahydrodipicolinate synthase (Halorhodospira halophila (strain DSM 244 / SL1) (Ectothiorhodospira halophila (strain DSM 244 / SL1))).